The chain runs to 247 residues: Ribosomal RNA small subunit methyltransferase G (247 aa).

Residues Gly-84, Phe-89, 136 to 137, and Arg-155 contribute to the S-adenosyl-L-methionine site; that span reads AE.

Belongs to the methyltransferase superfamily. RNA methyltransferase RsmG family.

It localises to the cytoplasm. Its function is as follows. Specifically methylates the N7 position of a guanine in 16S rRNA. In Prochlorococcus marinus (strain MIT 9313), this protein is Ribosomal RNA small subunit methyltransferase G.